Here is a 193-residue protein sequence, read N- to C-terminus: Interleukin-18 (193 aa).

The propeptide occupies M1–D36.

The protein belongs to the IL-1 family. As to quaternary structure, forms a ternary complex with ligand-binding receptor subunit IL18R1 and signaling receptor subunit IL18RAP at the plasma membrane. Mature IL18 first binds to IL18R1 forming a low affinity binary complex, which then interacts with IL18RAP to form a high affinity ternary complex that signals inside the cell. Interacts with cargo receptor TMED10; the interaction mediates the translocation from the cytoplasm into the ERGIC (endoplasmic reticulum-Golgi intermediate compartment) and thereby secretion. In terms of processing, the pro-IL-18 precursor is processed by CASP1, CASP4 or CASP5 to yield its mature, active form. The pro-IL-18 precursor features autoinhibitory interactions between the propeptide and the post-cleavage-site region, preventing recognition by the IL18R1 receptor. Processing by CASP1, CASP4 or CASP5 induces conformational changes to generate critical receptor-binding sites. The mature form is then secreted and released in the extracellular milieu by passing through the gasdermin-D (GSDMD) pore. In contrast, cleavage by CASP3 inactivates IL18.

It localises to the cytoplasm. It is found in the cytosol. The protein resides in the secreted. In terms of biological role, pro-inflammatory cytokine primarily involved in epithelial barrier repair, polarized T-helper 1 (Th1) cell and natural killer (NK) cell immune responses. Upon binding to IL18R1 and IL18RAP, forms a signaling ternary complex which activates NF-kappa-B, triggering synthesis of inflammatory mediators. Synergizes with IL12/interleukin-12 to induce IFNG synthesis from T-helper 1 (Th1) cells and natural killer (NK) cells. Involved in transduction of inflammation downstream of pyroptosis: its mature form is specifically released in the extracellular milieu by passing through the gasdermin-D (GSDMD) pore. The sequence is that of Interleukin-18 (IL18) from Bos taurus (Bovine).